We begin with the raw amino-acid sequence, 205 residues long: ATP phosphoribosyltransferase (205 aa).

The protein belongs to the ATP phosphoribosyltransferase family. Short subfamily. Heteromultimer composed of HisG and HisZ subunits.

It is found in the cytoplasm. The catalysed reaction is 1-(5-phospho-beta-D-ribosyl)-ATP + diphosphate = 5-phospho-alpha-D-ribose 1-diphosphate + ATP. It functions in the pathway amino-acid biosynthesis; L-histidine biosynthesis; L-histidine from 5-phospho-alpha-D-ribose 1-diphosphate: step 1/9. Catalyzes the condensation of ATP and 5-phosphoribose 1-diphosphate to form N'-(5'-phosphoribosyl)-ATP (PR-ATP). Has a crucial role in the pathway because the rate of histidine biosynthesis seems to be controlled primarily by regulation of HisG enzymatic activity. This Leptospira interrogans serogroup Icterohaemorrhagiae serovar Lai (strain 56601) protein is ATP phosphoribosyltransferase.